A 404-amino-acid chain; its full sequence is Argininosuccinate synthase (404 aa).

ATP contacts are provided by residues 10 to 18 (AYSGGLDTS) and A37. L-citrulline-binding residues include Y90 and S95. G120 contributes to the ATP binding site. L-aspartate contacts are provided by T122, N126, and D127. N126 contributes to the L-citrulline binding site. 5 residues coordinate L-citrulline: R130, S181, S190, E266, and Y278. The interval 173-200 (DKRGESPFSTDANLLHTSSEGKVLEDPW) is disordered. Polar residues predominate over residues 179–192 (PFSTDANLLHTSSE).

This sequence belongs to the argininosuccinate synthase family. Type 1 subfamily. In terms of assembly, homotetramer.

The protein localises to the cytoplasm. It catalyses the reaction L-citrulline + L-aspartate + ATP = 2-(N(omega)-L-arginino)succinate + AMP + diphosphate + H(+). It participates in amino-acid biosynthesis; L-arginine biosynthesis; L-arginine from L-ornithine and carbamoyl phosphate: step 2/3. The chain is Argininosuccinate synthase from Novosphingobium aromaticivorans (strain ATCC 700278 / DSM 12444 / CCUG 56034 / CIP 105152 / NBRC 16084 / F199).